Consider the following 86-residue polypeptide: Large ribosomal subunit protein bL27 (86 aa).

It belongs to the bacterial ribosomal protein bL27 family.

In Flavobacterium johnsoniae (strain ATCC 17061 / DSM 2064 / JCM 8514 / BCRC 14874 / CCUG 350202 / NBRC 14942 / NCIMB 11054 / UW101) (Cytophaga johnsonae), this protein is Large ribosomal subunit protein bL27.